The following is a 1002-amino-acid chain: MSFWPFGQNLNHSNINKILDEYFHVLHELERINPSVGKAIPAIFNNVQERGTSDSLDSIPEEYSHGDEVKTARGDQKSRFEKDDQQERYEKEEEERSMNSSESSTTSFSSGSTSKTDLDEEDISNATAPMMVTTKNLDNSFIERMLVETELLNELSRQNKTLLDFICFGFFFDKKTNKKVNNMEYLVDQLMECISKIKTATTVDLNNLIDYQEQQQLDDSSQEDVYVESDTEQEEEKEDDNNSNNKKRRKRGSSSFGNDDINNNDDDDDANEDDESAYLTKATIISEIFSLDIWLISESLVKNQSYLNKIWSIINQPNFNSENSPLVPIFLKINQNLLLTRQDQYLNFIRTERSFVDDMLKHVDISLLMDFFLKIISTDKIESPTGIIELVYDQNLISKCLSFLNNKESPADIQACVGDFLKALIAISANAPLDDISIGPNSLTRQLASPESIAKLVDIMINQRGAALNTTVSIVIELIRKNNSDYDQVNLLTTTIKTHPPSNRDPIYLGYLLRKFSNHLSDFFQIILDIENDANIPLHENQLHEKFKPLGFERFKVVELIAELLHCSNMGLMNSKRAERIARRRDKVRSQLSHHLQDALNDLSIEEKEQLKTKHSPTRDTDHDLKNNNGKIDNDNNDNDDESDYGDEIDESFEIPYINMKQNIKLRTDPTVGDLFKIKLYDTRIVSKIMELFLTHPWNNFWHNVIFDIIQQIFNGRMDFSYNSFLVLSLFNLKSSYQFMTDIVISDEKGTDVSRFSPVIRDPNFDFKITTDFILRGYQDSYKFYELRKMNLGYMGHIVLIAEEVVKFSKLYKVELISPDIQVILQTEEWQYYSEEVLNETRMMYSKILGGGSYIDDGNGNIIPQLPDNTTVLTPNGDASNNNEILDSDTGSSNGTSGGGQLINVESLEEQLSLSTESDLHNKLREMLINRAQEDVDNKNTENGVFILGPPEDKNSNSNINNTNHNSNNSNNNDNNDNNDNDNDNTRNYNEDADNDNDYDHE.

Disordered stretches follow at residues 51 to 131 (GTSD…APMM), 214 to 273 (QQQL…ANED), 609 to 645 (EQLK…ESDY), 868 to 901 (DNTT…GGGQ), and 940 to 1002 (NTEN…YDHE). A Phosphoserine modification is found at Ser-58. A compositionally biased stretch (basic and acidic residues) spans 62-97 (EYSHGDEVKTARGDQKSRFEKDDQQERYEKEEEERS). Residues 98–114 (MNSSESSTTSFSSGSTS) are compositionally biased toward low complexity. Residues 220–241 (SSQEDVYVESDTEQEEEKEDDN) show a composition bias toward acidic residues. Ser-255 bears the Phosphoserine mark. Acidic residues predominate over residues 262-273 (NNNDDDDDANED). The span at 609–626 (EQLKTKHSPTRDTDHDLK) shows a compositional bias: basic and acidic residues. Phosphothreonine occurs at positions 613 and 618. Positions 635 to 645 (DNNDNDDESDY) are enriched in acidic residues. Positions 868–885 (DNTTVLTPNGDASNNNEI) are enriched in polar residues. Low complexity predominate over residues 956-976 (SNSNINNTNHNSNNSNNNDNN). The segment covering 991-1002 (EDADNDNDYDHE) has biased composition (acidic residues).

Belongs to the SAPS family. In terms of assembly, associates with the SIT4 protein phosphatase catalytic subunit in a cell-cycle-dependent manner. Hyperphosphorylated in the absence of SIT4.

It localises to the cytoplasm. In terms of biological role, positive regulator of protein phosphatase SIT4. Involved in directing expression of TOR-repressed genes and in dephosphorylation of NPR1 in response to nutrient starvation. Negatively modulates K(+) efflux of the cell by the Na(+)-K(+)/H(+) antiporter NHA1. In Saccharomyces cerevisiae (strain ATCC 204508 / S288c) (Baker's yeast), this protein is SIT4-associating protein SAP155 (SAP155).